Reading from the N-terminus, the 566-residue chain is Urease subunit alpha (566 aa).

The region spanning 128–566 is the Urease domain; that stretch reads GGVDTHIHFI…LPMAQRYFLF (439 aa). Ni(2+) is bound by residues His133, His135, and Lys216. At Lys216 the chain carries N6-carboxylysine. Position 218 (His218) interacts with substrate. Ni(2+)-binding residues include His245 and His271. Catalysis depends on His319, which acts as the Proton donor. Asp359 contributes to the Ni(2+) binding site.

The protein belongs to the metallo-dependent hydrolases superfamily. Urease alpha subunit family. In terms of assembly, may form a heterohexamer of 3 UreC (alpha) and 3 UreAB (gamma/beta) subunits. May also form a heterotrimer of UreA (gamma), UreB (beta) and UreC (alpha) subunits. Three heterotrimers associate to form the active enzyme. Requires Ni cation as cofactor. In terms of processing, carboxylation allows a single lysine to coordinate two nickel ions.

The protein resides in the cytoplasm. The catalysed reaction is urea + 2 H2O + H(+) = hydrogencarbonate + 2 NH4(+). The protein operates within nitrogen metabolism; urea degradation; CO(2) and NH(3) from urea (urease route): step 1/1. The sequence is that of Urease subunit alpha from Pseudomonas savastanoi pv. phaseolicola (strain 1448A / Race 6) (Pseudomonas syringae pv. phaseolicola (strain 1448A / Race 6)).